A 389-amino-acid chain; its full sequence is MAAALLLALAFTLLSGQGACAAAGFLKAPLSQERWAGGSVVLHCEAVGSPIPEIQWWFEGNAPNDSCSQLWDGARLDRVHIHAAYRQHAASSLSVDGLTAEDTGTYECRASSDPDRNHLTRPPRVKWVRAQASVVVLEPGTIQTSVQEVNSKTQLTCSLNSSGVDIVGHRWMRGGKVLQEDTLPDLHTKYIVDADDRSGEYSCIFLPEPVGRSEINVEGPPRIKVGKKSEHSSEGELAKLVCKSDASYPPITDWFWFKTSDTGEEEAITNSTEANGKYVVVSTPEKSQLTISNLDVNVDPGTYVCNATNAQGTTRETISLRVRSRMAALWPFLGIVAEVLVLVTIIFIYEKRRKPDQTLDEDDPGAAPLKGSGTHMNDKDKNVRQRNAT.

The signal sequence occupies residues 1 to 21; it reads MAAALLLALAFTLLSGQGACA. Over 22 to 325 the chain is Extracellular; sequence AAGFLKAPLS…ETISLRVRSR (304 aa). The Ig-like domain maps to 37 to 120; the sequence is GGSVVLHCEA…SSDPDRNHLT (84 aa). 3 disulfide bridges follow: C44-C108, C157-C203, and C242-C305. In terms of domain architecture, Ig-like C2-type spans 138–219; it reads EPGTIQTSVQ…VGRSEINVEG (82 aa). N160, N270, and N306 each carry an N-linked (GlcNAc...) asparagine glycan. The Ig-like V-type domain occupies 221 to 319; it reads PRIKVGKKSE…AQGTTRETIS (99 aa). Residues 326–349 form a helical membrane-spanning segment; that stretch reads MAALWPFLGIVAEVLVLVTIIFIY. Residues 350 to 389 are Cytoplasmic-facing; sequence EKRRKPDQTLDEDDPGAAPLKGSGTHMNDKDKNVRQRNAT. The tract at residues 356 to 389 is disordered; the sequence is DQTLDEDDPGAAPLKGSGTHMNDKDKNVRQRNAT. Phosphothreonine is present on T358. Residue S372 is modified to Phosphoserine.

Interacts with NXNL1. Interacts with SLC2A1 and SLC16A1/GLUT1. Interacts with XKR8; promoting its localization at the cell membrane. As to quaternary structure, interacts with ATP1B2, MAG and L1CAM. Interacts with SLC16A7. Interacts with VEGFA, KDR/VEGFR2, PPIA/CYPA, SLC1A3, SLC16A11 and SLC16A12. Interacts with PPIL2; regulates BSG transport to the cell membrane. Interacts with SLC16A1; interaction mediates SLC16A1 targeting to the plasma membrane. Interacts with SLC16A3; interaction mediates SLC16A3 targeting to the plasma membrane. In terms of assembly, interacts with SLC16A6; this interaction mediates targeting to the plasma membrane. In terms of processing, N-glycosylated. Post-translationally, N-glycosylated. During spermatogenesis, probably deglycosylated during epididymal transit. In terms of tissue distribution, retina-specific. Expressed in both rods and cones (at protein level). Testis and caput, corpus and cauda epididymides (at protein level). Expressed in the brain, lung, liver, kidney, heart, spleen, uterus, retina and skeletal muscle.

The protein localises to the cell membrane. Its subcellular location is the photoreceptor inner segment. The protein resides in the cell projection. It localises to the cilium. It is found in the photoreceptor outer segment. The protein localises to the endoplasmic reticulum membrane. Its subcellular location is the basolateral cell membrane. In terms of biological role, essential for normal retinal maturation and development. Acts as a retinal cell surface receptor for NXNL1 and plays an important role in NXNL1-mediated survival of retinal cone photoreceptors. In association with glucose transporter SLC16A1/GLUT1 and NXNL1, promotes retinal cone survival by enhancing aerobic glycolysis and accelerating the entry of glucose into photoreceptors. Functionally, signaling receptor for cyclophilins, essential for PPIA/CYPA and PPIB/CYPB-dependent signaling related to chemotaxis and adhesion of immune cells. Plays an important role in targeting the monocarboxylate transporters SLC16A1, SLC16A3 and SLC16A8 to the plasma membrane. Acts as a coreceptor for vascular endothelial growth factor receptor 2 (KDR/VEGFR2) in endothelial cells enhancing its VEGFA-mediated activation and downstream signaling. Promotes angiogenesis through EPAS1/HIF2A-mediated up-regulation of VEGFA and KDR/VEGFR2 in endothelial cells. Plays an important role in spermatogenesis; mediates interactions between germ cells and Sertoli cell and is essential for the development/differentiation of germ cells to round spermatids. This chain is Basigin (Bsg), found in Mus musculus (Mouse).